A 454-amino-acid chain; its full sequence is UPF0210 protein Memar_2269 (454 aa).

This sequence belongs to the UPF0210 family.

The sequence is that of UPF0210 protein Memar_2269 from Methanoculleus marisnigri (strain ATCC 35101 / DSM 1498 / JR1).